The sequence spans 136 residues: Glutamate mutase sigma subunit (136 aa).

A B12-binding domain is found at 3–136 (KKKIVIGVIG…IIDLKKDFKI (134 aa)). Adenosylcob(III)alamin-binding positions include 13 to 17 (SDCHT), His16, and 61 to 63 (SSI).

It belongs to the methylaspartate mutase GlmS subunit family. Heterotetramer composed of 2 epsilon subunits (GlmE) and 2 sigma subunits (GlmS). GlmE exists as a homodimer and GlmS as a monomer. It depends on adenosylcob(III)alamin as a cofactor.

It catalyses the reaction (2S,3S)-3-methyl-L-aspartate = L-glutamate. Its pathway is amino-acid degradation; L-glutamate degradation via mesaconate pathway; acetate and pyruvate from L-glutamate: step 1/4. Its function is as follows. Catalyzes the carbon skeleton rearrangement of L-glutamate to L-threo-3-methylaspartate ((2S,3S)-3-methylaspartate). This chain is Glutamate mutase sigma subunit, found in Fusobacterium nucleatum subsp. nucleatum (strain ATCC 25586 / DSM 15643 / BCRC 10681 / CIP 101130 / JCM 8532 / KCTC 2640 / LMG 13131 / VPI 4355).